A 301-amino-acid chain; its full sequence is Peptidyl-prolyl isomerase CWC27 (301 aa).

Positions 9–159 constitute a PPIase cyclophilin-type domain; that stretch reads TTAKCILYTT…YPAVLKDVEI (151 aa). Residues 251 to 280 are disordered; sequence TELHDNVDEATTKETESQENIKEEPMDKRE.

The protein belongs to the cyclophilin-type PPIase family. CWC27 subfamily. In terms of assembly, belongs to the CWC complex (or CEF1-associated complex), a spliceosome subcomplex composed of the U2, U5 and U6 snRNAs and at least BUD13, BUD31, BRR2, CDC40, CEF1, CLF1, CUS1, CWC2, CWC15, CWC21, CWC22, CWC23, CWC24, CWC25, CWC27, ECM2, HSH155, IST3, ISY1, LEA1, MSL1, NTC20, PRP8, PRP9, PRP11, PRP19, PRP21, PRP22, PRP45, PRP46, SLU7, SMB1, SMD1, SMD2, SMD3, SMX2, SMX3, SNT309, SNU114, SPP2, SYF1, SYF2, RSE1 and YJU2.

The protein resides in the cytoplasm. The protein localises to the nucleus. The catalysed reaction is [protein]-peptidylproline (omega=180) = [protein]-peptidylproline (omega=0). Its function is as follows. PPIases accelerate the folding of proteins. Catalyzes the cis-trans isomerization of proline imidic peptide bonds in oligopeptides. Involved in pre-mRNA splicing. The protein is Peptidyl-prolyl isomerase CWC27 (CWC27) of Saccharomyces cerevisiae (strain ATCC 204508 / S288c) (Baker's yeast).